Reading from the N-terminus, the 369-residue chain is Glycolate oxidase (369 aa).

Methionine 1 is modified (N-acetylmethionine). Residues 1–359 (MEITNVNEYE…SRSHIAADWD (359 aa)) form the FMN hydroxy acid dehydrogenase domain. Tyrosine 24 contributes to the glyoxylate binding site. FMN-binding positions include 77–79 (PTA), serine 106, 127–129 (QLY), and threonine 155. A glyoxylate-binding site is contributed by tyrosine 129. Residue arginine 164 coordinates glyoxylate. Lysine 230 and serine 252 together coordinate FMN. Glyoxylate is bound by residues histidine 254 and arginine 257. Histidine 254 (proton acceptor) is an active-site residue. FMN is bound by residues 285–289 (DGGVR) and 308–309 (GR). The short motif at 367–369 (ARL) is the Microbody targeting signal element.

This sequence belongs to the FMN-dependent alpha-hydroxy acid dehydrogenase family. In terms of assembly, homotetramer. Requires FMN as cofactor.

The protein localises to the peroxisome. The enzyme catalyses glycolate + O2 = glyoxylate + H2O2. The catalysed reaction is a (2S)-2-hydroxycarboxylate + O2 = a 2-oxocarboxylate + H2O2. It functions in the pathway photosynthesis; photorespiration; glycine from 2-phosphoglycolate: step 2/3. Its function is as follows. Catalyzes the oxidation of glycolate to glyoxylate, with a reduction of O2 to H2O2. Is a key enzyme in photorespiration in green plants. To a lesser extent, is also able to use L-lactate and 2-hydroxbyutanoate as substrate in vitro, but shows almost no activity with L-mandelate. In Spinacia oleracea (Spinach), this protein is Glycolate oxidase.